Consider the following 306-residue polypeptide: Formimidoylglutamase (306 aa).

Residues Met1–Thr13 are compositionally biased toward polar residues. The disordered stretch occupies residues Met1–Tyr36. Mn(2+) contacts are provided by Asn123, Asp147, His149, Asp151, Asp234, and Asp236.

The protein belongs to the arginase family. Requires Mn(2+) as cofactor.

It carries out the reaction N-formimidoyl-L-glutamate + H2O = formamide + L-glutamate. It functions in the pathway amino-acid degradation; L-histidine degradation into L-glutamate; L-glutamate from N-formimidoyl-L-glutamate (hydrolase route): step 1/1. Functionally, catalyzes the conversion of N-formimidoyl-L-glutamate to L-glutamate and formamide. The chain is Formimidoylglutamase from Halobacterium salinarum (strain ATCC 29341 / DSM 671 / R1).